We begin with the raw amino-acid sequence, 258 residues long: Ubiquinone/menaquinone biosynthesis C-methyltransferase UbiE (258 aa).

Residues Thr-81, Asp-102, and Asn-130 to Ala-131 contribute to the S-adenosyl-L-methionine site.

This sequence belongs to the class I-like SAM-binding methyltransferase superfamily. MenG/UbiE family.

The enzyme catalyses a 2-demethylmenaquinol + S-adenosyl-L-methionine = a menaquinol + S-adenosyl-L-homocysteine + H(+). It catalyses the reaction a 2-methoxy-6-(all-trans-polyprenyl)benzene-1,4-diol + S-adenosyl-L-methionine = a 5-methoxy-2-methyl-3-(all-trans-polyprenyl)benzene-1,4-diol + S-adenosyl-L-homocysteine + H(+). The protein operates within quinol/quinone metabolism; menaquinone biosynthesis; menaquinol from 1,4-dihydroxy-2-naphthoate: step 2/2. Its pathway is cofactor biosynthesis; ubiquinone biosynthesis. Its function is as follows. Methyltransferase required for the conversion of demethylmenaquinol (DMKH2) to menaquinol (MKH2) and the conversion of 2-polyprenyl-6-methoxy-1,4-benzoquinol (DDMQH2) to 2-polyprenyl-3-methyl-6-methoxy-1,4-benzoquinol (DMQH2). The protein is Ubiquinone/menaquinone biosynthesis C-methyltransferase UbiE of Rhizobium rhizogenes (strain K84 / ATCC BAA-868) (Agrobacterium radiobacter).